We begin with the raw amino-acid sequence, 440 residues long: MKKLLLAASIVYFASACLAEEKTTPFLSNSDTKIKLEGFYLFESGYIKQNHLILFDKNVTDNRKKLGFYTEVAFAATITKTINDVIAGAKIVLQPTTKAKTAASYNGSHIFIETSYGKVELGSPVDASAKLRVTGNKVTAGTGGWYRYALLDGQYMRYNGLKPDFDTNVNFYLESYSNSFDQINEKTEKARRLNFFTPKMKGFQAGISYTPDTANTGGNKNINNLTLQSSGRNGISVSRTGIKTFALGNGETMTINQNIRDAFSAGLTYEHAISEDADLKLSMTGEYGKPARRLIHSKVDGTTKTIEVLNTYKLSNLKAYNLGAVFTYGNFSCGASYSNLGKSLTSKEYYKVGRNTYYYNGAVAYGQGPIKTSLAYLKASRYKNTVNAVSLATEYKIMPGLLPYAEISHFQAKGKPVYYPEAPSKTTRGTVGLIGTKLKF.

An N-terminal signal peptide occupies residues 1–19 (MKKLLLAASIVYFASACLA).

This is an uncharacterized protein from Rickettsia prowazekii (strain Madrid E).